The sequence spans 163 residues: Large ribosomal subunit protein eL24y (163 aa).

Basic and acidic residues predominate over residues 119-133 (IKKTKDEKKAKKVEF). The tract at residues 119 to 163 (IKKTKDEKKAKKVEFASKQQKVKANFPKAAAASKGPKVGGGGGKR) is disordered.

This sequence belongs to the eukaryotic ribosomal protein eL24 family. Interacts with REIL1 and REIL2. Component of the large ribosomal subunit. As to expression, ubiquitous.

It localises to the cytoplasm. The protein resides in the nucleus. Its subcellular location is the nucleolus. The protein localises to the nucleoplasm. In terms of biological role, might have an extraribosomal function in reinitiation of translation of ETTIN and MONOPTEROS genes that are involved in the auxin-mediated gynoecium patterning. Essential in leaf polarity establishment, probably having a role for translation in leaf dorsoventral patterning to specify leaf adaxial identity. The chain is Large ribosomal subunit protein eL24y from Arabidopsis thaliana (Mouse-ear cress).